A 140-amino-acid chain; its full sequence is Small ribosomal subunit protein uS9A (140 aa).

This sequence belongs to the universal ribosomal protein uS9 family. As to quaternary structure, component of the small ribosomal subunit (SSU). Mature yeast ribosomes consist of a small (40S) and a large (60S) subunit. The 40S small subunit contains 1 molecule of ribosomal RNA (18S rRNA) and at least 33 different proteins. The large 60S subunit contains 3 rRNA molecules (25S, 5.8S and 5S rRNA) and at least 46 different proteins.

It is found in the cytoplasm. Functionally, component of the ribosome, a large ribonucleoprotein complex responsible for the synthesis of proteins in the cell. The small ribosomal subunit (SSU) binds messenger RNAs (mRNAs) and translates the encoded message by selecting cognate aminoacyl-transfer RNA (tRNA) molecules. The large subunit (LSU) contains the ribosomal catalytic site termed the peptidyl transferase center (PTC), which catalyzes the formation of peptide bonds, thereby polymerizing the amino acids delivered by tRNAs into a polypeptide chain. The nascent polypeptides leave the ribosome through a tunnel in the LSU and interact with protein factors that function in enzymatic processing, targeting, and the membrane insertion of nascent chains at the exit of the ribosomal tunnel. The polypeptide is Small ribosomal subunit protein uS9A (rps1601) (Schizosaccharomyces pombe (strain 972 / ATCC 24843) (Fission yeast)).